A 708-amino-acid chain; its full sequence is Meiotic sister-chromatid recombination protein 6, mitochondrial (708 aa).

The N-terminal 15 residues, 1-15 (MLSVRISARQCSVRG), are a transit peptide targeting the mitochondrion. The segment covering 19 to 36 (QANNVSQPAKDNATNGSD) has biased composition (polar residues). The tract at residues 19-44 (QANNVSQPAKDNATNGSDAATEKKGT) is disordered.

Its subcellular location is the mitochondrion. Functionally, may be involved in the control of meiotic sister-chromatid recombination. The sequence is that of Meiotic sister-chromatid recombination protein 6, mitochondrial (MSC6) from Kluyveromyces lactis (strain ATCC 8585 / CBS 2359 / DSM 70799 / NBRC 1267 / NRRL Y-1140 / WM37) (Yeast).